The sequence spans 70 residues: Protein SlyX homolog (70 aa).

The protein belongs to the SlyX family.

The chain is Protein SlyX homolog from Shewanella sp. (strain MR-4).